Reading from the N-terminus, the 332-residue chain is Mitoferrin-1 (332 aa).

Solcar repeat units follow at residues 31-119, 129-213, and 220-314; these read ASLG…IKRS, NSHI…MQEH, and YRPE…FKYF. 6 consecutive transmembrane segments (helical) span residues 33–52, 94–113, 131–150, 188–207, 222–241, and 289–308; these read LGTH…TVMY, GLNI…FACY, HIAN…AVMN, SYST…FITY, PETH…AVTT, and GIQA…WSVY.

It belongs to the mitochondrial carrier (TC 2.A.29) family. As to expression, highly expressed in hematopoietic organs, Expressed in the intermediate cell mass (ICM), a tissue equivalent to the mammalian extraembryonic yolk-sac blood islands. Colocalizes with gata1.

It is found in the mitochondrion inner membrane. The enzyme catalyses Fe(2+)(in) = Fe(2+)(out). Mitochondrial iron transporter that specifically mediates iron uptake in developing erythroid cells, thereby playing an essential role in heme biosynthesis. The polypeptide is Mitoferrin-1 (slc25a37) (Danio rerio (Zebrafish)).